The sequence spans 286 residues: Transcription factor MafA (286 aa).

Ser14 and Ser49 each carry phosphoserine. A compositionally biased stretch (low complexity) spans Ser51 to Pro85. The segment at Ser51–Gly87 is disordered. Residues Thr53 and Thr57 each carry the phosphothreonine modification. A phosphoserine mark is found at Ser61 and Ser65. Phosphothreonine is present on Thr113. A disordered region spans residues His126–Arg167. The segment covering Ala152–Leu166 has biased composition (basic residues). The interval Arg199 to Arg224 is basic motif. Residues Arg199 to Leu262 form the bZIP domain. A leucine-zipper region spans residues Leu227–Leu248. Residues Arg265–Met286 are disordered. A Phosphoserine modification is found at Ser272. Over residues Pro277–Met286 the composition is skewed to low complexity.

It belongs to the bZIP family. Maf subfamily. As to quaternary structure, forms homodimers or heterodimers. May interact (via leucine-zipper domain) with MAFB. May interact with FOS and JUN. Interacts with PCAF; this interaction impairs MAFA ubiquitination.

It localises to the nucleus. Its function is as follows. Transcription factor involved in transcription regulation during lens development, including that of crystallin and filensin/BFSP1 genes. Binds to CRE-type MARE 5'-TGCTGACGTCAGCA-3' and TRE-type MARE 5'-TGCTGACTCAGCA-3' DNA sequences. The polypeptide is Transcription factor MafA (MAFA) (Gallus gallus (Chicken)).